The sequence spans 844 residues: 3',5'-cyclic-AMP phosphodiesterase 4A (844 aa).

The tract at residues Met-1 to Pro-124 is disordered. The residue at position 13 (Ser-13) is a Phosphoserine. The segment covering Gln-36 to Arg-46 has biased composition (low complexity). Residues Ser-51–Gly-78 show a composition bias toward basic and acidic residues. Polar residues predominate over residues Thr-82 to His-91. Ser-147 is modified (phosphoserine; by MAPKAPK2). Phosphoserine is present on residues Ser-152, Ser-160, and Ser-204. A disordered region spans residues Pro-296–Gln-317. Ser-333 is modified (phosphoserine). Positions Val-343–Ser-672 constitute a PDEase domain. Lys-344 is covalently cross-linked (Glycyl lysine isopeptide (Lys-Gly) (interchain with G-Cter in SUMO)). His-419 acts as the Proton donor in catalysis. His-419 provides a ligand contact to 3',5'-cyclic AMP. Positions 419 and 423 each coordinate AMP. Zn(2+) is bound by residues His-423, His-459, Asp-460, and Asp-577. AMP is bound by residues Asp-460, Asp-577, Gln-628, and Phe-631. A Mg(2+)-binding site is contributed by Asp-460. Asp-460 is a Mn(2+) binding site. Residues Gln-628 and Phe-631 each contribute to the 3',5'-cyclic AMP site. Disordered regions lie at residues Ala-668 to Pro-690 and Ser-818 to Ala-844. Phosphoserine is present on residues Ser-672 and Ser-674. Residues Cys-820–Ile-830 show a composition bias toward polar residues.

Belongs to the cyclic nucleotide phosphodiesterase family. PDE4 subfamily. Interacts with LYN (via SH3 domain). Interacts with ARRB2. Requires Zn(2+) as cofactor. Mg(2+) serves as cofactor. Mn(2+) is required as a cofactor. Post-translationally, phosphorylated by MAPKAPK2 at Ser-147; it counteracts PKA-induced activation of PDE4A and modulates intracellular cAMP levels. Likely involved in cellular desensitization to cAMP signaling. Proteolytically cleaved by CASP3. As to expression, isoform 2 is testis specific.

The protein localises to the cytoplasm. It localises to the cytosol. The protein resides in the membrane. It catalyses the reaction 3',5'-cyclic AMP + H2O = AMP + H(+). Its pathway is purine metabolism; 3',5'-cyclic AMP degradation; AMP from 3',5'-cyclic AMP: step 1/1. With respect to regulation, inhibited by rolipram. Functionally, hydrolyzes the second messenger 3',5'-cyclic AMP (cAMP), which is a key regulator of many important physiological processes. Efficiently hydrolyzes cAMP. The protein is 3',5'-cyclic-AMP phosphodiesterase 4A (Pde4a) of Rattus norvegicus (Rat).